A 389-amino-acid polypeptide reads, in one-letter code: Na(+)/H(+) antiporter NhaA 1 (389 aa).

The next 12 helical transmembrane spans lie at 12–32, 62–82, 97–117, 128–148, 157–177, 184–204, 220–240, 260–280, 282–302, 305–325, 331–351, and 365–385; these read VLNE…ALLV, FLLW…GLEL, IVLP…LFVL, GWAI…MMCG, IFLL…IAIF, IVAF…NILG, ISVL…AFFI, FWLA…VNLS, IDIG…LFVG, AGVF…LPQG, LYGV…IDGL, and LAIL…LKFF.

The protein belongs to the NhaA Na(+)/H(+) (TC 2.A.33) antiporter family.

Its subcellular location is the cell inner membrane. The catalysed reaction is Na(+)(in) + 2 H(+)(out) = Na(+)(out) + 2 H(+)(in). Functionally, na(+)/H(+) antiporter that extrudes sodium in exchange for external protons. The chain is Na(+)/H(+) antiporter NhaA 1 from Campylobacter jejuni subsp. jejuni serotype O:23/36 (strain 81-176).